Consider the following 153-residue polypeptide: Probable trafficking protein particle complex subunit 2 (153 aa).

This sequence belongs to the TRAPP small subunits family. Sedlin subfamily. As to quaternary structure, part of the multisubunit TRAPP (transport protein particle) complex.

It is found in the cytoplasm. Its subcellular location is the perinuclear region. It localises to the endoplasmic reticulum. The protein resides in the golgi apparatus. In terms of biological role, may play a role in vesicular transport from endoplasmic reticulum to Golgi. This Nematostella vectensis (Starlet sea anemone) protein is Probable trafficking protein particle complex subunit 2.